We begin with the raw amino-acid sequence, 690 residues long: Protein-glutamine gamma-glutamyltransferase 2 (690 aa).

An N-acetylalanine modification is found at Ala-2. Disulfide bonds link Cys-230-Cys-370 and Cys-370-Cys-371. Catalysis depends on residues Cys-277, His-335, and Asp-358. Ca(2+)-binding residues include Asn-398, Asp-400, Glu-436, Glu-446, and Glu-451. An N6-acetyllysine modification is found at Lys-467. 479–486 (RIRVGQNM) is a binding site for GTP. Glu-542 serves as a coordination point for Ca(2+). 583-586 (RDIY) serves as a coordination point for GTP. An Isoglutamyl lysine isopeptide (Gln-Lys) (interchain with K-?) cross-link involves residue Gln-636.

The protein belongs to the transglutaminase superfamily. Transglutaminase family. As to quaternary structure, monomer. Interacts with phospholipase C; promoting alpha-1 adrenergic receptor signaling. Interacts with PLCD1. The cofactor is Ca(2+). In terms of processing, disulfide bond formation inactivates the calcium-dependent acyltransferase activity. Cys-370 can form disulfide bonds with both Cys-230 and Cys-371: formation of a disulfide bond between Cys-230 and Cys-370 facilitates formation of the disulfide between Cys-370 and Cys-371, which promotes inactivation of the acyltransferase activity. May also form interchain disulfids between Cys-230 and Cys-370. Ca(2+) protects against disulfide bond formation and inactivation. Post-translationally, auto-transglutaminated: Forms covalent cross-links mediated by transglutaminase between Gln-636 and the epsilon-amino group of a lysine residue of itself or HMGB1, forming homopolymers and heteropolymers, respectively. S-nitrosylated, leading to inactivation of the acyltransferase activity.

It is found in the cytoplasm. The protein resides in the cytosol. The protein localises to the nucleus. It localises to the chromosome. Its subcellular location is the secreted. It is found in the extracellular space. The protein resides in the extracellular matrix. The protein localises to the cell membrane. It localises to the mitochondrion. It carries out the reaction L-glutaminyl-[protein] + L-lysyl-[protein] = [protein]-L-lysyl-N(6)-5-L-glutamyl-[protein] + NH4(+). The catalysed reaction is L-glutaminyl-[protein] + serotonin = 5-serotonyl-L-glutamyl-[protein] + NH4(+). It catalyses the reaction L-glutaminyl-[protein] + dopamine = 5-dopaminyl-L-glutamyl-[protein] + NH4(+). The enzyme catalyses L-glutaminyl-[protein] + histamine = 5-histaminyl-L-glutamyl-[protein] + NH4(+). It carries out the reaction L-glutaminyl-[protein] + (R)-noradrenaline = 5-(R)-noradrenalinyl-L-glutamyl-[protein] + NH4(+). The catalysed reaction is L-glutaminyl-[protein] + H2O = L-glutamyl-[protein] + NH4(+). Its activity is regulated as follows. Acyltransferase activity is regulated by the binding of GTP and Ca(2+): inactivated by GTP, which stabilizes its closed structure, thereby obstructing the accessibility of substrates to the active sites. In contrast, Ca(2+) acts as a cofactor by inducing conformational change to the active open form. In absence of Ca(2+), Mg(2+) may bind Ca(2+)-binding sites, promoting GTP-binding and subsequent inhibition of the acyltransferase activity. Extracellularly reduced and activated by CLIC3. Calcium-dependent acyltransferase that catalyzes the formation of covalent bonds between peptide-bound glutamine and various primary amines, such as gamma-amino group of peptide-bound lysine, or mono- and polyamines, thereby producing cross-linked or aminated proteins, respectively. Involved in many biological processes, such as bone development, angiogenesis, wound healing, cellular differentiation, chromatin modification and apoptosis. Acts as a protein-glutamine gamma-glutamyltransferase by mediating the cross-linking of proteins, such as ACO2, HSPB6, FN1, HMGB1, RAP1GDS1, SLC25A4/ANT1, SPP1 and WDR54. Under physiological conditions, the protein cross-linking activity is inhibited by GTP; inhibition is relieved by Ca(2+) in response to various stresses. When secreted, catalyzes cross-linking of proteins of the extracellular matrix, such as FN1 and SPP1 resulting in the formation of scaffolds. Plays a key role during apoptosis, both by (1) promoting the cross-linking of cytoskeletal proteins resulting in condensation of the cytoplasm, and by (2) mediating cross-linking proteins of the extracellular matrix, resulting in the irreversible formation of scaffolds that stabilize the integrity of the dying cells before their clearance by phagocytosis, thereby preventing the leakage of harmful intracellular components. In addition to protein cross-linking, can use different monoamine substrates to catalyze a vast array of protein post-translational modifications: mediates aminylation of serotonin, dopamine, noradrenaline or histamine into glutamine residues of target proteins to generate protein serotonylation, dopaminylation, noradrenalinylation or histaminylation, respectively. Mediates protein serotonylation of small GTPases during activation and aggregation of platelets, leading to constitutive activation of these GTPases. Plays a key role in chromatin organization by mediating serotonylation and dopaminylation of histone H3. Catalyzes serotonylation of 'Gln-5' of histone H3 (H3Q5ser) during serotonergic neuron differentiation, thereby facilitating transcription. Acts as a mediator of neurotransmission-independent role of nuclear dopamine in ventral tegmental area (VTA) neurons: catalyzes dopaminylation of 'Gln-5' of histone H3 (H3Q5dop), thereby regulating relapse-related transcriptional plasticity in the reward system. Regulates vein remodeling by mediating serotonylation and subsequent inactivation of ATP2A2/SERCA2. Also acts as a protein deamidase by mediating the side chain deamidation of specific glutamine residues of proteins to glutamate. Catalyzes specific deamidation of protein gliadin, a component of wheat gluten in the diet. May also act as an isopeptidase cleaving the previously formed cross-links. Also able to participate in signaling pathways independently of its acyltransferase activity: acts as a signal transducer in alpha-1 adrenergic receptor-mediated stimulation of phospholipase C-delta (PLCD) activity and is required for coupling alpha-1 adrenergic agonists to the stimulation of phosphoinositide lipid metabolism. In Cavia cutleri (Guinea pig), this protein is Protein-glutamine gamma-glutamyltransferase 2.